The chain runs to 343 residues: UDP-3-O-acylglucosamine N-acyltransferase (343 aa).

H245 (proton acceptor) is an active-site residue.

The protein belongs to the transferase hexapeptide repeat family. LpxD subfamily. Homotrimer.

It catalyses the reaction a UDP-3-O-[(3R)-3-hydroxyacyl]-alpha-D-glucosamine + a (3R)-hydroxyacyl-[ACP] = a UDP-2-N,3-O-bis[(3R)-3-hydroxyacyl]-alpha-D-glucosamine + holo-[ACP] + H(+). Its pathway is bacterial outer membrane biogenesis; LPS lipid A biosynthesis. Its function is as follows. Catalyzes the N-acylation of UDP-3-O-acylglucosamine using 3-hydroxyacyl-ACP as the acyl donor. Is involved in the biosynthesis of lipid A, a phosphorylated glycolipid that anchors the lipopolysaccharide to the outer membrane of the cell. In Phenylobacterium zucineum (strain HLK1), this protein is UDP-3-O-acylglucosamine N-acyltransferase.